A 555-amino-acid polypeptide reads, in one-letter code: Bifunctional epoxide hydrolase 2 (555 aa).

A phosphatase region spans residues 1-224; that stretch reads MTLRAAVFDL…KVTGIQLLNT (224 aa). 2 residues coordinate Mg(2+): Asp-9 and Asp-11. N6-acetyllysine is present on Lys-43. An N6-succinyllysine modification is found at Lys-55. 123–124 is a binding site for phosphate; the sequence is TN. Asp-185 contributes to the Mg(2+) binding site. Lys-191 and Lys-215 each carry N6-acetyllysine. Residues 235 to 555 form an epoxide hydrolase region; that stretch reads SDMSHGYVTV…ARNPPVVSKM (321 aa). The 273-residue stretch at 259–531 folds into the AB hydrolase-1 domain; sequence PAVCLCHGFP…CGHWTQMDKP (273 aa). Asp-335 functions as the Nucleophile in the catalytic mechanism. A Phosphoserine modification is found at Ser-370. Position 383 (Tyr-383) interacts with substrate. Lys-421 and Lys-455 each carry N6-succinyllysine. The active-site Proton donor is Tyr-466. Cys-522 carries the S-(15-deoxy-Delta12,14-prostaglandin J2-9-yl)cysteine lipid modification. His-524 serves as the catalytic Proton acceptor. The Microbody targeting signal motif lies at 553-555; the sequence is SKM. Residue Lys-554 is modified to N6-succinyllysine.

This sequence belongs to the AB hydrolase superfamily. Epoxide hydrolase family. As to quaternary structure, homodimer. Requires Mg(2+) as cofactor. Post-translationally, the N-terminus is blocked. The covalent modification of cysteine by 15-deoxy-Delta12,14-prostaglandin-J2 is autocatalytic and reversible. It may occur as an alternative to other cysteine modifications, such as S-nitrosylation and S-palmitoylation.

Its subcellular location is the cytoplasm. The protein resides in the peroxisome. The enzyme catalyses an epoxide + H2O = an ethanediol. The catalysed reaction is (9S,10S)-10-hydroxy-9-(phosphooxy)octadecanoate + H2O = (9S,10S)-9,10-dihydroxyoctadecanoate + phosphate. It carries out the reaction 12-phosphooxy-(9Z)-octadecenoate + H2O = 12-hydroxy-(9Z)-octadecenoate + phosphate. It catalyses the reaction 12-phosphooxy-(9E)-octadecenoate + H2O = 12-hydroxy-(9E)-octadecenoate + phosphate. The enzyme catalyses 12-(phosphooxy)octadecanoate + H2O = 12-hydroxyoctadecanoate + phosphate. The catalysed reaction is 8,9-epoxy-(5Z,11Z,14Z)-eicosatrienoate + H2O = 8,9-dihydroxy-(5Z,11Z,14Z)-eicosatrienoate. It carries out the reaction 11,12-epoxy-(5Z,8Z,14Z)-eicosatrienoate + H2O = 11,12-dihydroxy-(5Z,8Z,14Z)-eicosatrienoate. It catalyses the reaction 14,15-epoxy-(5Z,8Z,11Z)-eicosatrienoate + H2O = 14,15-dihydroxy-(5Z,8Z,11Z)-eicosatrienoate. The enzyme catalyses 9,10-epoxy-(12Z)-octadecenoate + H2O = 9,10-dihydroxy-(12Z)-octadecenoate. The catalysed reaction is 8-hydroxy-(11S,12S)-epoxy-(5Z,9E,14Z)-eicosatrienoate + H2O = (8,11R,12S)-trihydroxy-(5Z,9E,14Z)-eicosatrienoate. It carries out the reaction 10-hydroxy-(11S,12S)-epoxy- (5Z,8Z,14Z)-eicosatrienoate + H2O = (10,11S,12R)-trihydroxy-(5Z,8Z,14Z)-eicosatrienoate. It catalyses the reaction 1-tetradecanoyl-sn-glycerol 3-phosphate + H2O = 1-tetradecanoyl-sn-glycerol + phosphate. The enzyme catalyses 1-octadecanoyl-sn-glycero-3-phosphate + H2O = 1-octadecanoyl-sn-glycerol + phosphate. The catalysed reaction is 1-(5Z,8Z,11Z,14Z-eicosatetraenoyl)-sn-glycero-3-phosphate + H2O = 1-(5Z,8Z,11Z,14Z-eicosatetraenoyl)-sn-glycerol + phosphate. It carries out the reaction 1-hexadecanoyl-sn-glycero-3-phosphate + H2O = 1-hexadecanoyl-sn-glycerol + phosphate. It catalyses the reaction 1-(9Z-octadecenoyl)-sn-glycero-3-phosphate + H2O = 1-(9Z-octadecenoyl)-sn-glycerol + phosphate. The enzyme catalyses (8S,9R)-epoxy-(5Z,11Z,14Z)-eicosatrienoate + H2O = (8S,9S)-dihydroxy-(5Z,11Z,14Z)-eicosatrienoate. The catalysed reaction is (11S,12R)-epoxy-(5Z,8Z,14Z)-eicosatrienoate + H2O = (11R,12R)-dihydroxy-(5Z,8Z,14Z)-eicosatrienoate. It carries out the reaction (11S,12R)-epoxy-(5Z,8Z,14Z)-eicosatrienoate + H2O = (11S,12S)-dihydroxy-(5Z,8Z,14Z)-eicosatrienoate. It catalyses the reaction (14S,15R)-epoxy-(5Z,8Z,11Z)-eicosatrienoate + H2O = (14R,15R)-dihydroxy-(5Z,8Z,11Z)-eicosatrienoate. The enzyme catalyses (14S,15R)-epoxy-(5Z,8Z,11Z)-eicosatrienoate + H2O = (14S,15S)-dihydroxy-(5Z,8Z,11Z)-eicosatrienoate. The catalysed reaction is (11R,12S)-epoxy-(5Z,8Z,14Z)-eicosatrienoate + H2O = (11S,12S)-dihydroxy-(5Z,8Z,14Z)-eicosatrienoate. It carries out the reaction (11R,12S)-epoxy-(5Z,8Z,14Z)-eicosatrienoate + H2O = (11R,12R)-dihydroxy-(5Z,8Z,14Z)-eicosatrienoate. It catalyses the reaction (8S,9R)-epoxy-(5Z,11Z,14Z)-eicosatrienoate + H2O = (8R,9R)-dihydroxy-(5Z,11Z,14Z)-eicosatrienoate. The enzyme catalyses (14R,15S)-epoxy-(5Z,8Z,11Z)-eicosatrienoate + H2O = (14R,15R)-dihydroxy-(5Z,8Z,11Z)-eicosatrienoate. Inhibited by 1-(1-acetylpiperidin-4-yl)-3-(4-(trifl uoromethoxy)phenyl)urea (TPAU), 1-cyclohexyl-3-dodecylurea (CDU), 12-(3-adamantan-1-yl-ureido)-dodecanoic acid (AUDA), 1-((3S, 5S, 7S)-adamantan-1-yl)-3-(5-(2-(2-ethoxyethoxy) ethoxy)pentyl)urea (AEPU), N-adamantyl-N[']-cyclohexyl urea (ACU), 4-(((1S, 4S)-4-(3-((3S, 5S, 7S)-adamantan-1-yl) ureido)cyclohexyl)oxy)benzoic acid (c-AUCB), 4-(((1R, 4R)-4-(3-((3S, 5S, 7S)-adamantan-1-yl)ureido)cyclohexyl)oxy)benzoic acid (t-AUCB), 4-(((1R, 4R)-4-(3-(4(trifluoromethoxy)phenyl)ureido)cyclohexyl)oxy)benzoic acid (t-TAUCB) and to a lesser extent by 8-(3-((3S, 5S, 7S)-adamantan-1-yl)ureido) octanoic acid (AUOA). Phosphatase activity is inhibited by dodecyl-phosphate, phospholipids such as phospho-lysophosphatidic acids and fatty acids such as palmitic acid and lauric acid. Bifunctional enzyme. The C-terminal domain has epoxide hydrolase activity and acts on epoxides (alkene oxides, oxiranes) and arene oxides. Plays a role in xenobiotic metabolism by degrading potentially toxic epoxides. Also determines steady-state levels of physiological mediators. Functionally, bifunctional enzyme. The N-terminal domain has lipid phosphatase activity, with the highest activity towards threo-9,10-phosphonooxy-hydroxy-octadecanoic acid, followed by erythro-9,10-phosphonooxy-hydroxy-octadecanoic acid, 12-phosphonooxy-octadec-9Z-enoic acid and 12-phosphonooxy-octadec-9E-enoic acid. Has phosphatase activity toward lyso-glycerophospholipids with also some lower activity toward lysolipids of sphingolipid and isoprenoid phosphates. This chain is Bifunctional epoxide hydrolase 2, found in Homo sapiens (Human).